A 655-amino-acid polypeptide reads, in one-letter code: Mannosyl-oligosaccharide 1,2-alpha-mannosidase IA (655 aa).

Residues 1–43 are Cytoplasmic-facing; the sequence is MPVGGLLPLFSSPGGGGLGSGLGGGLGGGRKGSGPAAFRLTEK. The chain crosses the membrane as a helical; Signal-anchor for type II membrane protein span at residues 44–64; the sequence is FVLLLVFSAFITLCFGAIFFL. The Lumenal segment spans residues 65 to 655; sequence PDSSKLLSGV…QKKEIDGKEK (591 aa). Cys-478 and Cys-510 form a disulfide bridge. Asn-515 carries an N-linked (GlcNAc...) asparagine glycan. Glu-524 serves as the catalytic Proton donor. Position 635 (Thr-635) interacts with Ca(2+).

This sequence belongs to the glycosyl hydrolase 47 family. The cofactor is Ca(2+). Post-translationally, N-linked glycan at Asn-515 consists of Man(6)-GlcNAc(2).

Its subcellular location is the golgi apparatus membrane. The enzyme catalyses N(4)-(alpha-D-Man-(1-&gt;2)-alpha-D-Man-(1-&gt;2)-alpha-D-Man-(1-&gt;3)-[alpha-D-Man-(1-&gt;2)-alpha-D-Man-(1-&gt;3)-[alpha-D-Man-(1-&gt;2)-alpha-D-Man-(1-&gt;6)]-alpha-D-Man-(1-&gt;6)]-beta-D-Man-(1-&gt;4)-beta-D-GlcNAc-(1-&gt;4)-beta-D-GlcNAc)-L-asparaginyl-[protein] (N-glucan mannose isomer 9A1,2,3B1,2,3) + 4 H2O = N(4)-(alpha-D-Man-(1-&gt;3)-[alpha-D-Man-(1-&gt;3)-[alpha-D-Man-(1-&gt;6)]-alpha-D-Man-(1-&gt;6)]-beta-D-Man-(1-&gt;4)-beta-D-GlcNAc-(1-&gt;4)-beta-D-GlcNAc)-L-asparaginyl-[protein] (N-glucan mannose isomer 5A1,2) + 4 beta-D-mannose. It catalyses the reaction N(4)-(alpha-D-Man-(1-&gt;2)-alpha-D-Man-(1-&gt;2)-alpha-D-Man-(1-&gt;3)-[alpha-D-Man-(1-&gt;3)-[alpha-D-Man-(1-&gt;2)-alpha-D-Man-(1-&gt;6)]-alpha-D-Man-(1-&gt;6)]-beta-D-Man-(1-&gt;4)-beta-D-GlcNAc-(1-&gt;4)-beta-D-GlcNAc)-L-asparaginyl-[protein] (N-glucan mannose isomer 8A1,2,3B1,3) + 3 H2O = N(4)-(alpha-D-Man-(1-&gt;3)-[alpha-D-Man-(1-&gt;3)-[alpha-D-Man-(1-&gt;6)]-alpha-D-Man-(1-&gt;6)]-beta-D-Man-(1-&gt;4)-beta-D-GlcNAc-(1-&gt;4)-beta-D-GlcNAc)-L-asparaginyl-[protein] (N-glucan mannose isomer 5A1,2) + 3 beta-D-mannose. Its pathway is protein modification; protein glycosylation. Its activity is regulated as follows. Inhibited by both 1-deoxymannojirimycin and kifunensine. Functionally, involved in the maturation of Asn-linked oligosaccharides. Progressively trim alpha-1,2-linked mannose residues from Man(9)GlcNAc(2) to produce Man(5)GlcNAc(2). The chain is Mannosyl-oligosaccharide 1,2-alpha-mannosidase IA (Man1a1) from Mus musculus (Mouse).